The sequence spans 148 residues: Transcriptional repressor NrdR (148 aa).

A zinc finger spans residues 3-32 (CPKCSSEESKVVDSRQAEDAIRRRRVCESC). Positions 47 to 137 (LLVIKKDDKR…VYRSFKDVSE (91 aa)) constitute an ATP-cone domain.

The protein belongs to the NrdR family. The cofactor is Zn(2+).

Negatively regulates transcription of bacterial ribonucleotide reductase nrd genes and operons by binding to NrdR-boxes. This is Transcriptional repressor NrdR from Lactococcus lactis subsp. lactis (strain IL1403) (Streptococcus lactis).